Reading from the N-terminus, the 474-residue chain is Tubulin gamma-2 chain (474 aa).

142–148 serves as a coordination point for GTP; sequence AGGTGSG.

The protein belongs to the tubulin family. As to quaternary structure, gamma-tubulin complex is composed of gamma-tubulin and GCP proteins.

Its subcellular location is the cytoplasm. It localises to the cytoskeleton. The protein resides in the microtubule organizing center. It is found in the nucleus. The protein localises to the cell cortex. Functionally, tubulin is the major constituent of microtubules. The gamma chain is found at microtubule organizing centers (MTOC) such as the spindle poles, suggesting that it is involved in the minus-end nucleation of microtubule assembly. Its function is as follows. Gamma-tubulin complex is essential for the control of microtubular network remodeling in the course of initiation and development of giant-feeding cells, and for the successful reproduction of nematodes (e.g. Meloidogyne spp.) in their plant hosts. The sequence is that of Tubulin gamma-2 chain (TUBG2) from Arabidopsis thaliana (Mouse-ear cress).